The following is a 979-amino-acid chain: Receptor-type tyrosine-protein phosphatase-like N (979 aa).

The first 34 residues, 1–34 (MRRPRRPGGLGGSGGLRLLLCLLLLSSRPGGCSA), serve as a signal peptide directing secretion. An RESP18 homology domain region spans residues 35–131 (VSAHGCLFDR…RPRDRSGLAP (97 aa)). Residues 35-575 (VSAHGCLFDR…QTAHSTSPMR (541 aa)) lie on the Lumenal side of the membrane. Cysteine 53 and cysteine 62 are joined by a disulfide. Basic and acidic residues-rich tracts occupy residues 112-127 (RIPR…RDRS) and 304-323 (RAED…RGEK). 3 disordered regions span residues 112–173 (RIPR…SSSL), 289–329 (SRAR…SPAV), and 393–439 (VEGR…ARPP). A Phosphoserine modification is found at serine 308. Residues 415–433 (SPTSSEVQQVPSPVSSEPP) are compositionally biased toward low complexity. An O-linked (GalNAc...) threonine glycan is attached at threonine 441. The tract at residues 449–575 (SPLGQSQPTV…QTAHSTSPMR (127 aa)) is sufficient for dimerization of proICA512. N-linked (GlcNAc...) asparagine glycans are attached at residues asparagine 506 and asparagine 524. The chain crosses the membrane as a helical span at residues 576-600 (SVLLTLVALAGVAGLLVALAVALCV). Residues 601–732 (RQHARQQDKE…PNTCATAQGE (132 aa)) are sufficient for dimerization of proICA512. The Cytoplasmic segment spans residues 601-979 (RQHARQQDKE…VNAILKALPQ (379 aa)). The disordered stretch occupies residues 643-680 (NRAEGPPEPSRVSSVSSQFSDAAQASPSSHSSTPSWCE). A compositionally biased stretch (low complexity) spans 652–677 (SRVSSVSSQFSDAAQASPSSHSSTPS). Residues 709–969 (LAKEWQALCA…EFALTAVAEE (261 aa)) enclose the Tyrosine-protein phosphatase domain. Lysine 754 participates in a covalent cross-link: Glycyl lysine isopeptide (Lys-Gly) (interchain with G-Cter in SUMO).

The protein belongs to the protein-tyrosine phosphatase family. Receptor class 8 subfamily. In terms of assembly, homodimer; shown for the unprocessed protein (proICA512) in the endoplasmic reticulum and resolved during protein maturation as ICA512-TMF seems to be predominantly monomeric in secretory granules; however, ICA512-CCF interacts with ICA512-TMF disrupting the ICA512-TMF:SNTB2 complex. The isolated lumenal RESP18 homology domain has been shown to form disulfide-linked homooligomers. Interacts (via cytoplasmic domain) with phosphorylated SNTB2; this protects PTPRN against cleavage by CAPN1 to produce ICA512-CCF. Dephosphorylation of SNTB2 upon insulin stimulation disrupts the interaction and results in PTPRN cleavage. Interacts with SNX19. ICA512-CCF interacts with PIAS4; in the nucleus. Interacts with STAT5B (phosphorylated); down-regulated by ICA512-CCF sumoylation; ICA512-CCF prevents STAT5B dephosphorylation; ICA512-CCF mediates interaction of STAT5B with PIAS4. Interacts (via RESP18 homology domain) with insulin and proinsulin. Interacts with PTPRN2, PTPRA and PTPRE. Post-translationally, N-glycosylated. O-glycosylated with core 1 or possibly core 8 glycans. In terms of processing, subject to proteolytic cleavage at multiple sites. Subject to cleavage on a pair of basic residues. On exocytosis of secretory granules in pancreatic beta-cells ICA512-TMF is transiently inserted in the plasma-membrane and cleaved by mu-type calpain CPN1 to yield ICA512-CCF. Post-translationally, sumoylated at two sites including Lys-754. Sumoylation decreases interaction with STAT5. Expression is restricted to neuroendocrine cells. Found in pancreas, brain and pituitary.

Its subcellular location is the membrane. The protein resides in the cytoplasmic vesicle. It is found in the secretory vesicle membrane. It localises to the perikaryon. The protein localises to the cell projection. Its subcellular location is the axon. The protein resides in the synapse. It is found in the cell membrane. It localises to the endosome. The protein localises to the nucleus. Its function is as follows. Plays a role in vesicle-mediated secretory processes. Required for normal accumulation of secretory vesicles in hippocampus, pituitary and pancreatic islets. Required for the accumulation of normal levels of insulin-containing vesicles and preventing their degradation. Plays a role in insulin secretion in response to glucose stimuli. Required for normal accumulation of the neurotransmitters norepinephrine, dopamine and serotonin in the brain. In females, but not in males, required for normal accumulation and secretion of pituitary hormones, such as luteinizing hormone (LH) and follicle-stimulating hormone (FSH). Required to maintain normal levels of renin expression and renin release. Seems to lack intrinsic enzyme activity. May regulate catalytic active protein-tyrosine phosphatases such as PTPRA through dimerization. In terms of biological role, ICA512-TMF regulates dynamics and exocytosis of insulin secretory granules (SGs); binding of ICA512-TMF to SNTB2/beta-2-syntrophin is proposed to restrain SGs mobility and exocytosis by tethering them to the actin cytoskeleton depending on UTRN; the function is inhibited by cytoplasmic ICA512-CFF dimerizing with ICA512-TMF and displacing SNTB2. ICA512-CCF translocated to the nucleus promotes expression of insulin and other granule-related genes; the function implicates binding to and regulating activity of STAT5B probably by preventing its dephosphorylation and potentially by inducing its sumoylation by recruiting PIAS4. Enhances pancreatic beta-cell proliferation by converging with signaling by STAT5B and STAT3. ICA512-CCF located in the cytoplasm regulates dynamics and exocytosis of insulin secretory granules (SGs) by dimerizing with ICA512-TMF and displacing SNTB2 thus enhancing SGs mobility and exocytosis. In Homo sapiens (Human), this protein is Receptor-type tyrosine-protein phosphatase-like N (PTPRN).